Reading from the N-terminus, the 387-residue chain is 1-deoxy-D-xylulose 5-phosphate reductoisomerase (387 aa).

Residues threonine 10, glycine 11, serine 12, isoleucine 13, glycine 36, lysine 37, asparagine 38, and asparagine 123 each contribute to the NADPH site. Position 124 (lysine 124) interacts with 1-deoxy-D-xylulose 5-phosphate. Residue glutamate 125 participates in NADPH binding. Aspartate 149 provides a ligand contact to Mn(2+). 4 residues coordinate 1-deoxy-D-xylulose 5-phosphate: serine 150, glutamate 151, serine 175, and histidine 198. Glutamate 151 contacts Mn(2+). Glycine 204 is an NADPH binding site. Residues serine 211, asparagine 216, lysine 217, and glutamate 220 each contribute to the 1-deoxy-D-xylulose 5-phosphate site. Glutamate 220 provides a ligand contact to Mn(2+).

The protein belongs to the DXR family. It depends on Mg(2+) as a cofactor. Requires Mn(2+) as cofactor.

It carries out the reaction 2-C-methyl-D-erythritol 4-phosphate + NADP(+) = 1-deoxy-D-xylulose 5-phosphate + NADPH + H(+). Its pathway is isoprenoid biosynthesis; isopentenyl diphosphate biosynthesis via DXP pathway; isopentenyl diphosphate from 1-deoxy-D-xylulose 5-phosphate: step 1/6. In terms of biological role, catalyzes the NADPH-dependent rearrangement and reduction of 1-deoxy-D-xylulose-5-phosphate (DXP) to 2-C-methyl-D-erythritol 4-phosphate (MEP). In Pelotomaculum thermopropionicum (strain DSM 13744 / JCM 10971 / SI), this protein is 1-deoxy-D-xylulose 5-phosphate reductoisomerase.